The following is an 87-amino-acid chain: Small ribosomal subunit protein bS16 (87 aa).

It belongs to the bacterial ribosomal protein bS16 family.

In Onion yellows phytoplasma (strain OY-M), this protein is Small ribosomal subunit protein bS16.